The primary structure comprises 359 residues: Isopentenyl-diphosphate delta-isomerase (359 aa).

11–12 is a substrate binding site; sequence RK. FMN is bound by residues Ser68, 69–71, Ser99, and Asn127; that span reads GMT. 99-101 contacts substrate; it reads SQR. Position 163 (Gln163) interacts with substrate. Residue Glu164 participates in Mg(2+) binding. Residues Lys199, Thr229, 278–280, and 299–300 each bind FMN; these read GIR and AL.

This sequence belongs to the IPP isomerase type 2 family. In terms of assembly, homooctamer. Dimer of tetramers. FMN serves as cofactor. NADPH is required as a cofactor. Requires Mg(2+) as cofactor.

It localises to the cytoplasm. It catalyses the reaction isopentenyl diphosphate = dimethylallyl diphosphate. With respect to regulation, inhibited by 3,4-epoxy-3-methylbutyl diphosphate (EIPP). Functionally, involved in the biosynthesis of isoprenoids. Catalyzes the 1,3-allylic rearrangement of the homoallylic substrate isopentenyl (IPP) to its allylic isomer, dimethylallyl diphosphate (DMAPP). This Methanocaldococcus jannaschii (strain ATCC 43067 / DSM 2661 / JAL-1 / JCM 10045 / NBRC 100440) (Methanococcus jannaschii) protein is Isopentenyl-diphosphate delta-isomerase.